The chain runs to 192 residues: Fe/S biogenesis protein NfuA (192 aa).

[4Fe-4S] cluster contacts are provided by Cys149 and Cys152.

This sequence belongs to the NfuA family. Homodimer. [4Fe-4S] cluster serves as cofactor.

Its function is as follows. Involved in iron-sulfur cluster biogenesis. Binds a 4Fe-4S cluster, can transfer this cluster to apoproteins, and thereby intervenes in the maturation of Fe/S proteins. Could also act as a scaffold/chaperone for damaged Fe/S proteins. The protein is Fe/S biogenesis protein NfuA of Proteus mirabilis (strain HI4320).